A 429-amino-acid chain; its full sequence is Zinc-regulated GTPase metalloprotein activator 1 (429 aa).

The short motif at 15 to 22 is the psi-PxLVp motif element; sequence GELPCLVT. Residue 78–85 coordinates GTP; it reads GYLGSGKS. Zn(2+) contacts are provided by Cys-136, Cys-138, and Cys-139. Positions 136-139 match the CXCC motif motif; the sequence is CLCC. Residues 139 to 143 and 244 to 247 contribute to the GTP site; these read CSLKN and NKYD. Positions 362-428 constitute a CobW C-terminal domain; sequence RDWEVQRTKG…SIEELLRKTL (67 aa).

It belongs to the SIMIBI class G3E GTPase family. ZNG1 subfamily.

It catalyses the reaction GTP + H2O = GDP + phosphate + H(+). Zinc chaperone that directly transfers zinc cofactor to target metalloproteins, thereby activating them. Catalyzes zinc insertion into the active site of methionine aminopeptidase MAP1, which function to cleave the initiator methionine from polypeptides during or after protein translation. Mechanistically, the N-terminal psi-PxLVp motif binds to the C6H2-type zinc finger of inactive form of MAP1. After formation of the docked complex, zinc is transferred from the CXCC motif in the GTPase domain of ZNG1 to the zinc binding site in the peptidase domain of MAP1 in a process requiring GTP hydrolysis. GTP/GDP exchange is required for release of active MAP1. This Saccharomyces cerevisiae (strain ATCC 204508 / S288c) (Baker's yeast) protein is Zinc-regulated GTPase metalloprotein activator 1.